A 148-amino-acid polypeptide reads, in one-letter code: Large ribosomal subunit protein bL9 (148 aa).

The protein belongs to the bacterial ribosomal protein bL9 family.

Its function is as follows. Binds to the 23S rRNA. This chain is Large ribosomal subunit protein bL9, found in Lysinibacillus sphaericus (strain C3-41).